The chain runs to 203 residues: ATP-dependent Clp protease proteolytic subunit (203 aa).

Serine 100 serves as the catalytic Nucleophile. Histidine 125 is a catalytic residue.

It belongs to the peptidase S14 family. In terms of assembly, fourteen ClpP subunits assemble into 2 heptameric rings which stack back to back to give a disk-like structure with a central cavity, resembling the structure of eukaryotic proteasomes.

It localises to the cytoplasm. It carries out the reaction Hydrolysis of proteins to small peptides in the presence of ATP and magnesium. alpha-casein is the usual test substrate. In the absence of ATP, only oligopeptides shorter than five residues are hydrolyzed (such as succinyl-Leu-Tyr-|-NHMec, and Leu-Tyr-Leu-|-Tyr-Trp, in which cleavage of the -Tyr-|-Leu- and -Tyr-|-Trp bonds also occurs).. Functionally, cleaves peptides in various proteins in a process that requires ATP hydrolysis. Has a chymotrypsin-like activity. Plays a major role in the degradation of misfolded proteins. The polypeptide is ATP-dependent Clp protease proteolytic subunit (Anaeromyxobacter sp. (strain K)).